Reading from the N-terminus, the 338-residue chain is CRISPR-associated endonuclease Cas1 (338 aa).

E165, H230, and E245 together coordinate Mn(2+).

This sequence belongs to the CRISPR-associated endonuclease Cas1 family. In terms of assembly, homodimer, forms a heterotetramer with a Cas2 homodimer. The cofactor is Mg(2+). It depends on Mn(2+) as a cofactor.

In terms of biological role, CRISPR (clustered regularly interspaced short palindromic repeat), is an adaptive immune system that provides protection against mobile genetic elements (viruses, transposable elements and conjugative plasmids). CRISPR clusters contain spacers, sequences complementary to antecedent mobile elements, and target invading nucleic acids. CRISPR clusters are transcribed and processed into CRISPR RNA (crRNA). Acts as a dsDNA endonuclease. Involved in the integration of spacer DNA into the CRISPR cassette. The polypeptide is CRISPR-associated endonuclease Cas1 (Fusobacterium nucleatum subsp. nucleatum (strain ATCC 25586 / DSM 15643 / BCRC 10681 / CIP 101130 / JCM 8532 / KCTC 2640 / LMG 13131 / VPI 4355)).